Reading from the N-terminus, the 205-residue chain is MNSHHFLVGLTGGIGSGKSAAADRLAELGAAVIDTDLIAHALTAPGGAAIEPIRAAFGDAVITVDGALDRKAMRDLAFSDPQARRQLEAIIHPAIRAESDRQIREARGPYAVLVVPLLIESNAYRDRYDRICVVDCPVDVQIARVMTRSHLPEDQVRAIIAVQSSREEKLAAADDVIDNSGDLASLYAQVDRLHARYLAAARATG.

In terms of domain architecture, DPCK spans 7–204; that stretch reads LVGLTGGIGS…ARYLAAARAT (198 aa). 15 to 20 is a binding site for ATP; sequence GSGKSA.

Belongs to the CoaE family.

The protein resides in the cytoplasm. It carries out the reaction 3'-dephospho-CoA + ATP = ADP + CoA + H(+). It participates in cofactor biosynthesis; coenzyme A biosynthesis; CoA from (R)-pantothenate: step 5/5. Catalyzes the phosphorylation of the 3'-hydroxyl group of dephosphocoenzyme A to form coenzyme A. The chain is Dephospho-CoA kinase from Aromatoleum aromaticum (strain DSM 19018 / LMG 30748 / EbN1) (Azoarcus sp. (strain EbN1)).